The sequence spans 297 residues: Large ribosomal subunit protein uL24m (297 aa).

Serine 2 bears the N-acetylserine mark. Residues 63-96 (FIPGDRVVVMSGASKGNIAVIKSFDKRTNSFILD) enclose the KOW domain.

It belongs to the universal ribosomal protein uL24 family. In terms of assembly, component of the mitochondrial large ribosomal subunit (mt-LSU). Mature yeast 74S mitochondrial ribosomes consist of a small (37S) and a large (54S) subunit. The 37S small subunit contains a 15S ribosomal RNA (15S mt-rRNA) and 34 different proteins. The 54S large subunit contains a 21S rRNA (21S mt-rRNA) and 46 different proteins. uL24m forms the wall of the exit tunnel.

It is found in the mitochondrion. Its function is as follows. Component of the mitochondrial ribosome (mitoribosome), a dedicated translation machinery responsible for the synthesis of mitochondrial genome-encoded proteins, including at least some of the essential transmembrane subunits of the mitochondrial respiratory chain. The mitoribosomes are attached to the mitochondrial inner membrane and translation products are cotranslationally integrated into the membrane. The sequence is that of Large ribosomal subunit protein uL24m (MRPL40) from Saccharomyces cerevisiae (strain ATCC 204508 / S288c) (Baker's yeast).